The sequence spans 307 residues: tRNA-cytidine(32) 2-sulfurtransferase (307 aa).

The PP-loop motif signature appears at 44 to 49 (SGGKDS). [4Fe-4S] cluster is bound by residues C119, C122, and C210.

Belongs to the TtcA family. As to quaternary structure, homodimer. It depends on Mg(2+) as a cofactor. [4Fe-4S] cluster is required as a cofactor.

The protein resides in the cytoplasm. The catalysed reaction is cytidine(32) in tRNA + S-sulfanyl-L-cysteinyl-[cysteine desulfurase] + AH2 + ATP = 2-thiocytidine(32) in tRNA + L-cysteinyl-[cysteine desulfurase] + A + AMP + diphosphate + H(+). It functions in the pathway tRNA modification. Functionally, catalyzes the ATP-dependent 2-thiolation of cytidine in position 32 of tRNA, to form 2-thiocytidine (s(2)C32). The sulfur atoms are provided by the cysteine/cysteine desulfurase (IscS) system. This is tRNA-cytidine(32) 2-sulfurtransferase from Aliivibrio salmonicida (strain LFI1238) (Vibrio salmonicida (strain LFI1238)).